Consider the following 375-residue polypeptide: MDALRLANSAFAVELFKQLCEKEPAGNILFSPICLSTSLSLAQVGAKGDTANEIGQVLHFENVKDVPFGFKPITSDVNKLSSFYSLKLIKRLYIDKSLNLSTEFISSTKRPYANELETVDFKDKLEETKGQINSSIKELTDGHFEDILPENSISDQTKILVVNAAYFVGKWMKKFPESETKECPFRINKTDTKPVQMMNLEATFCLGNIDDINCKIIELPFQNKHLSMLIVLPKDVEDESTGLEKIEKQLNPETLLQWTNPSTMANAKVKLSLPKFKVEKMIDPKASLESLGLKSLFNESTSDFSGMSETKGVSVSNVIHRVCLEITEDGGDSIEVPGSRILQHKDEFKADHPFLFIVRHNKTRNIVFLGKFSSP.

N-linked (GlcNAc...) asparagine glycosylation is found at Asn-99, Asn-133, Asn-188, Asn-298, and Asn-361.

The protein belongs to the serpin family. Ov-serpin subfamily. As to quaternary structure, interacts with IRF6.

It localises to the secreted. It is found in the extracellular space. Functionally, tumor suppressor. It blocks the growth, invasion, and metastatic properties of mammary tumors. As it does not undergo the S (stressed) to R (relaxed) conformational transition characteristic of active serpins, it exhibits no serine protease inhibitory activity. The sequence is that of Serpin B5 (Serpinb5) from Rattus norvegicus (Rat).